Reading from the N-terminus, the 1058-residue chain is MSTAKLDFVRAYEKEVQNKWESDKQFEIDALDAPDAEHPKYLATFPYPYMNGRLHVGHVFTITKAEFMCQFQRLMGKRVLFPFAFHCTGMPIKACADKLKKEIEQFGCPPVFPVIEEKPIQEVTTAVKEDPLSFKSKKTKAVAKSGGAVYQWKIMQSLGISDEEIPMFADSAYWLNYFPPHCESDLKLLGVGVDWRRSFITTDVNGYYDSFVRWQFESLKALGKVKYGKRYSIWSTIDDQQCADHERAQGEGVGPQNYTLIKLEVVEPIPECLKEIHSQGKKIYLVPGTLRPETMYGQTNCWILPTGKYGAFEMANGDIFVCTERSARNMSYQQMTTGKGEYKCLAKFEGSDILGAALKAPLAINPIVYVLPMLTIDENKGTGVVTSVPSDSPDDYASLQDLKAKAPLRAKFSIKDEWVLPFEVVPIIDIPGYSNESAVRAYKDLGIKSQNDRALLDQAKDLCYQKGFNDGVMSVGPYAGRKVSEVKKIIKDEMVASGQAVDYSEPTSKVVSRSGDECVVALSDQWYINYGDDDIEWKNQTIKQLESMEFYSAETKKKFEIALGWMNQWACSRSFGLGTHLPWDEKFLIESLSDSTIYMAFYTVAHLLQGDVNGSKPGSAGITPKQMTSACWDYVLMGKPYPEGCEVSEEKLKELKKEFTYWYPVDIRVSGADLIQNHLTFFLYTHAAIFEKKFQPKSIRANGFVNLNGEKMSKSTGNFLTLVDSVAKFSADGTRVALADAGDSIEDANFVDQTAVTSLLKLHTQIQWVQETLDSIDKFRSGPLDRIQDTIFESEINNIIVESEKAYQKTNFRDALHLVFFDLQNARDHYKVTTLDQMHKDLVLRFIEVQALLIYPIAPHFAQKLFNMLGKGNILSAGWPKAGAIDYEALKKNNYVQQTIYNFRMKLQVYQKAKLKGKPAGTKAIPDQSTIIVSKSYPKWQQDVLEYLATIYNEDSKSFTKDNNAIAEELLSREEMKPHKKNLMGFVASAIQNVKESGKDALQTSLSFDETSTLTDNIDYICKTLELTSFDVKDFNEIPQASQSKIQPIPGKPQFQFV.

A 'HIGH' region motif is present at residues proline 48 to histidine 58. Positions lysine 711–serine 715 match the 'KMSKS' region motif. Lysine 714 lines the ATP pocket.

This sequence belongs to the class-I aminoacyl-tRNA synthetase family.

It is found in the cytoplasm. It catalyses the reaction tRNA(Leu) + L-leucine + ATP = L-leucyl-tRNA(Leu) + AMP + diphosphate. The polypeptide is Leucine--tRNA ligase, cytoplasmic (leuS) (Dictyostelium discoideum (Social amoeba)).